Reading from the N-terminus, the 359-residue chain is Photosystem II protein D1 2 (359 aa).

Transmembrane regions (helical) follow at residues 29–46 (YVGW…AATT), 118–133 (HFLI…EWEL), and 142–156 (WICV…AASA). Residue histidine 118 coordinates chlorophyll a. Tyrosine 126 provides a ligand contact to pheophytin a. [CaMn4O5] cluster contacts are provided by aspartate 170 and glutamate 189. The helical transmembrane segment at 197–218 (FHMLGVAGVFGGSLFSAMHGSL) threads the bilayer. Histidine 198 is a binding site for chlorophyll a. A quinone-binding positions include histidine 215 and 264–265 (SF). Histidine 215 contributes to the Fe cation binding site. Histidine 272 is a binding site for Fe cation. A helical transmembrane segment spans residues 274 to 288 (FLAAWPVVGIWFTAL). Residues histidine 332, glutamate 333, aspartate 342, and alanine 344 each contribute to the [CaMn4O5] cluster site. A propeptide spanning residues 345 to 359 (AAESTPVALQAPAIG) is cleaved from the precursor.

This sequence belongs to the reaction center PufL/M/PsbA/D family. In terms of assembly, PSII is composed of 1 copy each of membrane proteins PsbA, PsbB, PsbC, PsbD, PsbE, PsbF, PsbH, PsbI, PsbJ, PsbK, PsbL, PsbM, PsbT, PsbX, PsbY, PsbZ, Psb30/Ycf12, peripheral proteins PsbO, CyanoQ (PsbQ), PsbU, PsbV and a large number of cofactors. It forms dimeric complexes. The D1/D2 heterodimer binds P680, chlorophylls that are the primary electron donor of PSII, and subsequent electron acceptors. It shares a non-heme iron and each subunit binds pheophytin, quinone, additional chlorophylls, carotenoids and lipids. D1 provides most of the ligands for the Mn4-Ca-O5 cluster of the oxygen-evolving complex (OEC). There is also a Cl(-1) ion associated with D1 and D2, which is required for oxygen evolution. The PSII complex binds additional chlorophylls, carotenoids and specific lipids. is required as a cofactor. Tyr-161 forms a radical intermediate that is referred to as redox-active TyrZ, YZ or Y-Z. In terms of processing, C-terminally processed by CtpA; processing is essential to allow assembly of the oxygen-evolving complex and thus photosynthetic growth.

Its subcellular location is the cellular thylakoid membrane. It carries out the reaction 2 a plastoquinone + 4 hnu + 2 H2O = 2 a plastoquinol + O2. Its function is as follows. Photosystem II (PSII) is a light-driven water:plastoquinone oxidoreductase that uses light energy to abstract electrons from H(2)O, generating O(2) and a proton gradient subsequently used for ATP formation. It consists of a core antenna complex that captures photons, and an electron transfer chain that converts photonic excitation into a charge separation. The D1/D2 (PsbA/PsbD) reaction center heterodimer binds P680, the primary electron donor of PSII as well as several subsequent electron acceptors. This Synechococcus sp. (strain CC9311) protein is Photosystem II protein D1 2.